Here is a 359-residue protein sequence, read N- to C-terminus: GTP cyclohydrolase FolE2 (359 aa).

The protein belongs to the GTP cyclohydrolase IV family.

The catalysed reaction is GTP + H2O = 7,8-dihydroneopterin 3'-triphosphate + formate + H(+). It participates in cofactor biosynthesis; 7,8-dihydroneopterin triphosphate biosynthesis; 7,8-dihydroneopterin triphosphate from GTP: step 1/1. Its function is as follows. Converts GTP to 7,8-dihydroneopterin triphosphate. The chain is GTP cyclohydrolase FolE2 from Cereibacter sphaeroides (strain ATCC 17025 / ATH 2.4.3) (Rhodobacter sphaeroides).